Here is a 160-residue protein sequence, read N- to C-terminus: MLKKLAWYWSFVELIKGFIITLRYAFKPKVTLKYPMEKGPLSPRFRGEHALRRYSNGEERCIACKLCEVICPAQAIVIEAEEREDGSRRTTRYDIDMTKCIYCGLCQEACPVDAIVEGPNFEFATETREELMYNKEKLLRNGEIWEEAIALRLKKDVSYH.

4Fe-4S ferredoxin-type domains follow at residues 52-81 (RRYS…IEAE) and 91-120 (TRYD…EGPN). [4Fe-4S] cluster-binding residues include Cys-61, Cys-64, Cys-67, Cys-71, Cys-100, Cys-103, Cys-106, and Cys-110.

Belongs to the complex I 23 kDa subunit family. In terms of assembly, NDH-1 is composed of 14 different subunits. Subunits NuoA, H, J, K, L, M, N constitute the membrane sector of the complex. [4Fe-4S] cluster is required as a cofactor.

It localises to the cell membrane. It carries out the reaction a quinone + NADH + 5 H(+)(in) = a quinol + NAD(+) + 4 H(+)(out). NDH-1 shuttles electrons from NADH, via FMN and iron-sulfur (Fe-S) centers, to quinones in the respiratory chain. The immediate electron acceptor for the enzyme in this species is believed to be ubiquinone. Couples the redox reaction to proton translocation (for every two electrons transferred, four hydrogen ions are translocated across the cytoplasmic membrane), and thus conserves the redox energy in a proton gradient. This Wolbachia sp. subsp. Brugia malayi (strain TRS) protein is NADH-quinone oxidoreductase subunit I.